The sequence spans 262 residues: Protein N-terminal and lysine N-methyltransferase EFM7 (262 aa).

S-adenosyl-L-methionine is bound by residues Trp59, 86–88 (GAA), Asp108, Trp143, and Ser171.

Belongs to the class I-like SAM-binding methyltransferase superfamily. EFM7 family.

It is found in the cytoplasm. Its function is as follows. S-adenosyl-L-methionine-dependent protein methyltransferase that trimethylates the N-terminal glycine 'Gly-2' of elongation factor 1-alpha, before also catalyzing the mono- and dimethylation of 'Lys-3'. This Candida albicans (strain SC5314 / ATCC MYA-2876) (Yeast) protein is Protein N-terminal and lysine N-methyltransferase EFM7.